Consider the following 304-residue polypeptide: MSPKHFLDLSAVTSADLRTIMNDALARKQAFKAGTGDKPLAGKMLAMIFEKPSTRTRVSFDVGMRQLGGETLFLSGTEMQLGRAETIGDTAKVLSRYVDAIMIRTTEHSRLLELAQHATVPVINALTDDTHPCQIMADIMTFEEHRGPIKGKTIAWTGDGNNVLHSLVEGAARFGYRMNMAVPLGSEPKDHYLNWARNEGAEIMLCHDADRAVAGVDCVVTDTWVSMNQEHRARGHNVFQPYQVNAALMAKAGNDALFMHCLPAHRGEEVTDDVIDGPQSVVFDEAENRLHAQKSILAWCLGAI.

Carbamoyl phosphate contacts are provided by residues 53 to 56, Gln80, Arg104, and 131 to 134; these read STRT and HPCQ. Residues Asn162, Asp222, and 226–227 each bind L-ornithine; that span reads SM. Residues 261-262 and Arg289 each bind carbamoyl phosphate; that span reads CL.

This sequence belongs to the aspartate/ornithine carbamoyltransferase superfamily. OTCase family.

It localises to the cytoplasm. The enzyme catalyses carbamoyl phosphate + L-ornithine = L-citrulline + phosphate + H(+). It functions in the pathway amino-acid biosynthesis; L-arginine biosynthesis; L-arginine from L-ornithine and carbamoyl phosphate: step 1/3. Reversibly catalyzes the transfer of the carbamoyl group from carbamoyl phosphate (CP) to the N(epsilon) atom of ornithine (ORN) to produce L-citrulline. In Rhizobium johnstonii (strain DSM 114642 / LMG 32736 / 3841) (Rhizobium leguminosarum bv. viciae), this protein is Ornithine carbamoyltransferase.